The chain runs to 143 residues: Flagellar assembly factor FliW (143 aa).

This sequence belongs to the FliW family. Interacts with translational regulator CsrA and flagellin(s).

It localises to the cytoplasm. Acts as an anti-CsrA protein, binds CsrA and prevents it from repressing translation of its target genes, one of which is flagellin. Binds to flagellin and participates in the assembly of the flagellum. This is Flagellar assembly factor FliW from Clostridium botulinum (strain 657 / Type Ba4).